The chain runs to 144 residues: MPPKKKKITALIKLQINAGKATPAPPVGPALGQHGVNIMEFCKQYNAATESQTGNVVPVEITVYDDRSFTFVTKTPPAARLILKAAGVDKGSGTPHRVKVAKLTPAQVREIAQTKLPDLNANSIEAAEKIIAGTARSMGITVGE.

It belongs to the universal ribosomal protein uL11 family. Part of the ribosomal stalk of the 50S ribosomal subunit. Interacts with L10 and the large rRNA to form the base of the stalk. L10 forms an elongated spine to which L12 dimers bind in a sequential fashion forming a multimeric L10(L12)X complex. Post-translationally, one or more lysine residues are methylated.

Its function is as follows. Forms part of the ribosomal stalk which helps the ribosome interact with GTP-bound translation factors. This Parafrankia sp. (strain EAN1pec) protein is Large ribosomal subunit protein uL11.